Reading from the N-terminus, the 1324-residue chain is Myotubularin-related protein DDB_G0290005 (1324 aa).

Residues 140-276 (KYHDNTTPNN…TSSTNGNCST (137 aa)) form a disordered region. The segment covering 144-180 (NTTPNNNNNNNNNNNNNNNNTNNNNNNNINKSNNSST) has biased composition (low complexity). Residues 181–194 (DQLNSFSLEKQPSQ) are compositionally biased toward polar residues. Over residues 195–222 (NENLNNNNNNNNNNNNGNNNINNNNLMN) the composition is skewed to low complexity. The span at 223 to 247 (SLTQPSTSSRSRLLKSNSTPINLNE) shows a compositional bias: polar residues. Residues 248-276 (SSTSTNSPTLSSTTTTTTTTSSTNGNCST) show a composition bias toward low complexity. A Myotubularin phosphatase domain is found at 349 to 807 (GWLFYDPIEE…KGVQLWSDYF (459 aa)). Residues 514–515 (NI), 575–581 (CIDGWDR), and R621 each bind substrate. Residue C575 is the Phosphocysteine intermediate of the active site. Disordered stretches follow at residues 624-664 (QSIS…TTTS), 841-1043 (QKKK…QQQE), 1066-1110 (EQQE…QQQT), 1144-1213 (RKQE…LTMP), and 1232-1296 (LHPN…DNTS). Composition is skewed to low complexity over residues 625–664 (SISS…TTTS) and 852–864 (GASG…SGSS). Positions 865 to 882 (SKHHHHHHHHHHHHHHRK) are enriched in basic residues. A compositionally biased stretch (basic and acidic residues) spans 883 to 894 (STDEKDSKEKSS). 2 stretches are compositionally biased toward low complexity: residues 899–914 (SRTS…STSS) and 927–973 (TITT…TTTP). Over residues 988 to 1002 (DKLKSPSGDDIKQEQ) the composition is skewed to basic and acidic residues. Residues 1005–1024 (MNQFTSQHPNNQMESSSEIN) show a composition bias toward polar residues. Residues 1020-1195 (SSEINQQNEQ…LEQQKPKADI (176 aa)) are a coiled coil. Positions 1025–1043 (QQNEQSQLEQQQEQQQQQE) are enriched in low complexity. Positions 1079–1090 (PNETITYSMESD) are enriched in polar residues. Residues 1091 to 1109 (SQSSISQNQNQLQQQQQQQ) show a composition bias toward low complexity. Over residues 1144–1193 (RKQEKEKRKLEKEKKQKERAERKLEKEKKRDQKEREQKEKELLEQQKPKA) the composition is skewed to basic and acidic residues. A compositionally biased stretch (polar residues) spans 1234-1243 (PNLSDQNSQT). 2 stretches are compositionally biased toward low complexity: residues 1244–1258 (NSSG…NSPN) and 1265–1294 (SNLS…NNDN).

This sequence belongs to the protein-tyrosine phosphatase family. Non-receptor class myotubularin subfamily.

It localises to the cytoplasm. In terms of biological role, phosphatase that acts on lipids with a phosphoinositol headgroup. This Dictyostelium discoideum (Social amoeba) protein is Myotubularin-related protein DDB_G0290005.